The primary structure comprises 54 residues: Large ribosomal subunit protein bL33 (54 aa).

Belongs to the bacterial ribosomal protein bL33 family.

The protein is Large ribosomal subunit protein bL33 of Thermobifida fusca (strain YX).